Here is a 414-residue protein sequence, read N- to C-terminus: Esterase FrsA (414 aa).

This sequence belongs to the FrsA family.

The catalysed reaction is a carboxylic ester + H2O = an alcohol + a carboxylate + H(+). Its function is as follows. Catalyzes the hydrolysis of esters. This is Esterase FrsA from Escherichia coli O139:H28 (strain E24377A / ETEC).